The chain runs to 61 residues: Small ribosomal subunit protein uS14 (61 aa).

Zn(2+)-binding residues include Cys24, Cys27, Cys40, and Cys43.

It belongs to the universal ribosomal protein uS14 family. Zinc-binding uS14 subfamily. In terms of assembly, part of the 30S ribosomal subunit. Contacts proteins S3 and S10. The cofactor is Zn(2+).

In terms of biological role, binds 16S rRNA, required for the assembly of 30S particles and may also be responsible for determining the conformation of the 16S rRNA at the A site. This Acetivibrio thermocellus (strain ATCC 27405 / DSM 1237 / JCM 9322 / NBRC 103400 / NCIMB 10682 / NRRL B-4536 / VPI 7372) (Clostridium thermocellum) protein is Small ribosomal subunit protein uS14.